A 278-amino-acid chain; its full sequence is Aquaporin NIP3-3 (278 aa).

The next 2 helical transmembrane spans lie at 70–90 and 99–119; these read VSAE…TIIM and TLLG…LSLI. The NPA 1 motif lies at 127-129; the sequence is NPA. The next 3 membrane-spanning stretches (helical) occupy residues 141–163, 185–205, and 213–233; these read PSAH…SFAV, AFFV…ALAT, and LIAV…GPST. An NPA 2 motif is present at residues 238–240; sequence NPA. A helical membrane pass occupies residues 255 to 275; it reads IWVYLVATPLGAIAGTGAYVA.

It belongs to the MIP/aquaporin (TC 1.A.8) family. NIP (TC 1.A.8.12) subfamily. In terms of tissue distribution, expressed in leaves and at lower levels in roots and anthers.

The protein resides in the membrane. Functionally, aquaporins facilitate the transport of water and small neutral solutes across cell membranes. The chain is Aquaporin NIP3-3 (NIP3-3) from Oryza sativa subsp. japonica (Rice).